We begin with the raw amino-acid sequence, 128 residues long: Glycine cleavage system H protein (128 aa).

In terms of domain architecture, Lipoyl-binding spans V24–K106. The residue at position 65 (K65) is an N6-lipoyllysine.

This sequence belongs to the GcvH family. The glycine cleavage system is composed of four proteins: P, T, L and H. It depends on (R)-lipoate as a cofactor.

Functionally, the glycine cleavage system catalyzes the degradation of glycine. The H protein shuttles the methylamine group of glycine from the P protein to the T protein. This chain is Glycine cleavage system H protein, found in Serratia proteamaculans (strain 568).